Reading from the N-terminus, the 429-residue chain is tRNA-2-methylthio-N(6)-dimethylallyladenosine synthase (429 aa).

An MTTase N-terminal domain is found at 2 to 115 (KLLYLQTLGC…ISEAVKTPKF (114 aa)). [4Fe-4S] cluster contacts are provided by Cys11, Cys46, Cys78, Cys147, Cys151, and Cys154. One can recognise a Radical SAM core domain in the interval 133-365 (RGSPYKAFVN…QSRHNEILDE (233 aa)). The 62-residue stretch at 368–429 (KNQVGKIFDV…RMVLYGKITA (62 aa)) folds into the TRAM domain.

Belongs to the methylthiotransferase family. MiaB subfamily. In terms of assembly, monomer. [4Fe-4S] cluster serves as cofactor.

Its subcellular location is the cytoplasm. The catalysed reaction is N(6)-dimethylallyladenosine(37) in tRNA + (sulfur carrier)-SH + AH2 + 2 S-adenosyl-L-methionine = 2-methylsulfanyl-N(6)-dimethylallyladenosine(37) in tRNA + (sulfur carrier)-H + 5'-deoxyadenosine + L-methionine + A + S-adenosyl-L-homocysteine + 2 H(+). Catalyzes the methylthiolation of N6-(dimethylallyl)adenosine (i(6)A), leading to the formation of 2-methylthio-N6-(dimethylallyl)adenosine (ms(2)i(6)A) at position 37 in tRNAs that read codons beginning with uridine. The protein is tRNA-2-methylthio-N(6)-dimethylallyladenosine synthase of Campylobacter hominis (strain ATCC BAA-381 / DSM 21671 / CCUG 45161 / LMG 19568 / NCTC 13146 / CH001A).